The following is an 858-amino-acid chain: Putative glutamate--cysteine ligase 2-3 (858 aa).

Residues 1–372 (MSDARNVAVG…RDVPPAGASL (372 aa)) form a carboxylate-amine ligase region. The segment at 373–858 (GVAPAVSAPD…GSKDTWIPRR (486 aa)) is unknown.

In the N-terminal section; belongs to the glutamate--cysteine ligase type 2 family. YbdK subfamily.

The enzyme catalyses L-cysteine + L-glutamate + ATP = gamma-L-glutamyl-L-cysteine + ADP + phosphate + H(+). In terms of biological role, ATP-dependent carboxylate-amine ligase which exhibits weak glutamate--cysteine ligase activity. This Frankia alni (strain DSM 45986 / CECT 9034 / ACN14a) protein is Putative glutamate--cysteine ligase 2-3.